A 760-amino-acid chain; its full sequence is Complement C2 (760 aa).

The first 18 residues, 1–18 (MAPLLALFYLLQLGPGLA), serve as a signal peptide directing secretion. Sushi domains lie at 20–90 (LFCN…AVCK), 92–151 (VRCL…VCDN), and 154–212 (SHCP…ICRQ). 6 disulfide bridges follow: Cys-22–Cys-62, Cys-49–Cys-89, Cys-94–Cys-136, Cys-122–Cys-149, Cys-156–Cys-197, and Cys-182–Cys-210. N-linked (GlcNAc...) asparagine glycosylation is found at Asn-27 and Asn-32. N-linked (GlcNAc...) asparagine glycosylation is present at Asn-117. Positions 261-459 (NLYLLLDASQ…KALQQIFEHM (199 aa)) constitute a VWFA domain. Residues 267–271 (DASQS) carry the MIDAS-like motif motif. Positions 269 and 271 each coordinate Mg(2+). N-linked (GlcNAc...) asparagine glycans are attached at residues Asn-297 and Asn-340. Residue Thr-344 coordinates Mg(2+). 5 disulfide bridges follow: Cys-470-Cys-590, Cys-499-Cys-515, Cys-593-Cys-609, Cys-647-Cys-674, and Cys-685-Cys-715. The region spanning 471-752 (GVGNMSANAS…LQPWLRQHLD (282 aa)) is the Peptidase S1 domain. Residues Asn-474 and Asn-478 are each glycosylated (N-linked (GlcNAc...) asparagine). Residues His-514 and Asp-570 each act as charge relay system in the active site. An N-linked (GlcNAc...) asparagine glycan is attached at Asn-663. Ser-689 (charge relay system) is an active-site residue.

This sequence belongs to the peptidase S1 family. As to quaternary structure, serine protease component of the C3 convertase, also named C4bC2b, composed of the serine protease complement C2b and complement C4b. Serine protease component of the C5 convertase, also named C4bC2bC3b, composed of the serine protease complement C2b, complement C3b, as well as complement C4b. The cofactor is Mg(2+). Mn(2+) is required as a cofactor. Cleaved and activated by different proteases depending on the complement pathway to generate complement C2a and serine protease complement C2b chains. Cleaved and activated by C1S following activation by the classical complement system. Cleaved and activated by MASP2 following activation by the lectin complement system. Cleaved and activated by GZMK following activation by the GZMK complement system.

Its subcellular location is the secreted. The protein resides in the cell surface. The catalysed reaction is Selective cleavage of Arg-|-Ser bond in complement component C3 alpha-chain to form C3a and C3b, and Arg-|-Xaa bond in complement component C5 alpha-chain to form C5a and C5b.. In terms of biological role, precursor of the catalytic component of the C3 and C5 convertase complexes, which are part of the complement pathway, a cascade of proteins that leads to phagocytosis and breakdown of pathogens and signaling that strengthens the adaptive immune system. Component C2 is part of the classical, lectin and GZMK complement systems. Functionally, catalytic component of the complement C3 and C5 convertase complexes. Following complement activation, recruited to the surface of pathogens by complement C4b opsonin to form the C3 convertase, or C3b and C4b opsonins to form the C5 convertase. As part of the C3 convertase, cleaves and activate C3 into C3a anaphylatoxin and C3b opsonin, the next components of the complement pathways. As part of the C5 convertase, cleaves and activate C5 into C5a anaphylatoxin and C5b component of the membrane attack complex. In Mus musculus (Mouse), this protein is Complement C2.